The following is a 171-amino-acid chain: Probable chorismate pyruvate-lyase (171 aa).

Methionine 36, arginine 78, leucine 116, and glutamate 157 together coordinate substrate.

This sequence belongs to the UbiC family.

The protein resides in the cytoplasm. The catalysed reaction is chorismate = 4-hydroxybenzoate + pyruvate. It functions in the pathway cofactor biosynthesis; ubiquinone biosynthesis. Its function is as follows. Removes the pyruvyl group from chorismate, with concomitant aromatization of the ring, to provide 4-hydroxybenzoate (4HB) for the ubiquinone pathway. This chain is Probable chorismate pyruvate-lyase, found in Bartonella bacilliformis (strain ATCC 35685 / KC583 / Herrer 020/F12,63).